Here is a 185-residue protein sequence, read N- to C-terminus: Crossover junction endodeoxyribonuclease RuvC (185 aa).

Residues D7, E66, and D137 contribute to the active site. D7, E66, and D137 together coordinate Mg(2+).

It belongs to the RuvC family. In terms of assembly, homodimer which binds Holliday junction (HJ) DNA. The HJ becomes 2-fold symmetrical on binding to RuvC with unstacked arms; it has a different conformation from HJ DNA in complex with RuvA. In the full resolvosome a probable DNA-RuvA(4)-RuvB(12)-RuvC(2) complex forms which resolves the HJ. It depends on Mg(2+) as a cofactor.

It localises to the cytoplasm. The enzyme catalyses Endonucleolytic cleavage at a junction such as a reciprocal single-stranded crossover between two homologous DNA duplexes (Holliday junction).. In terms of biological role, the RuvA-RuvB-RuvC complex processes Holliday junction (HJ) DNA during genetic recombination and DNA repair. Endonuclease that resolves HJ intermediates. Cleaves cruciform DNA by making single-stranded nicks across the HJ at symmetrical positions within the homologous arms, yielding a 5'-phosphate and a 3'-hydroxyl group; requires a central core of homology in the junction. The consensus cleavage sequence is 5'-(A/T)TT(C/G)-3'. Cleavage occurs on the 3'-side of the TT dinucleotide at the point of strand exchange. HJ branch migration catalyzed by RuvA-RuvB allows RuvC to scan DNA until it finds its consensus sequence, where it cleaves and resolves the cruciform DNA. This is Crossover junction endodeoxyribonuclease RuvC from Anaeromyxobacter dehalogenans (strain 2CP-C).